The sequence spans 236 residues: MSELDAREIIEMIAKAKKKTPIVAYIKGDLAGIDFSSFKFFGDERFGILFGEYEDFKKLLEEHREKIEDYHLEVKARNSALPLADLTKYKARIEPGAIIRDMVEIGEGAVIMMGAVINVGAVIGEGTMIDMNAVVGGRAIIGKKCHIGAGAVIAGVIEPPSAKPVVIEDEVLVGANAVILEGVTVGKGAVVAAGAVVTKDVPPYTVVAGVPARVIKQIDEKTKEKTKIVDELRNLE.

Belongs to the transferase hexapeptide repeat family. DapH subfamily.

It carries out the reaction (S)-2,3,4,5-tetrahydrodipicolinate + acetyl-CoA + H2O = L-2-acetamido-6-oxoheptanedioate + CoA. It participates in amino-acid biosynthesis; L-lysine biosynthesis via DAP pathway; LL-2,6-diaminopimelate from (S)-tetrahydrodipicolinate (acetylase route): step 1/3. Its function is as follows. Catalyzes the transfer of an acetyl group from acetyl-CoA to tetrahydrodipicolinate. In Thermotoga maritima (strain ATCC 43589 / DSM 3109 / JCM 10099 / NBRC 100826 / MSB8), this protein is 2,3,4,5-tetrahydropyridine-2,6-dicarboxylate N-acetyltransferase.